A 217-amino-acid chain; its full sequence is Very-long-chain (3R)-3-hydroxyacyl-CoA dehydratase PHS1 (217 aa).

The Cytoplasmic portion of the chain corresponds to 1–11 (MSKKLASPLSF). The chain crosses the membrane as a helical span at residues 12–29 (LPLYNLLSAVGWSYLLYL). Residues 30–47 (VISLYPKVGQPAFFYQTK) lie on the Lumenal side of the membrane. The chain crosses the membrane as a helical span at residues 48 to 66 (NVATLVQCGAIIEIINSFL). Over 67–76 (GVVRSPLLTT) the chain is Cytoplasmic. The helical transmembrane segment at 77–94 (VAQVSSRLLVVLGIFQLL) threads the bilayer. Residues 95–99 (PNTSG) are Lumenal-facing. Residues 100–117 (VQSVVYISLLLAWSITEI) traverse the membrane as a helical segment. At 118–142 (VRYLYYFFMLVFKNGAPKILILLRY) the chain is on the cytoplasmic side. Residues 143–160 (NLFWILYPTGVASELRII) traverse the membrane as a helical segment. Active-site residues include tyrosine 149 and glutamate 156. Residues 161–178 (YCALNAAESQYSLLYKRI) lie on the Lumenal side of the membrane. The helical transmembrane segment at 179–196 (LIAAMLAYIPGFPMLFLH) threads the bilayer. The Cytoplasmic segment spans residues 197-217 (MVAQRKKVMKSLRSSFGKKLI). Residues 214-217 (KKLI) carry the Endoplasmic reticulum retention signal motif.

This sequence belongs to the very long-chain fatty acids dehydratase HACD family.

It localises to the endoplasmic reticulum membrane. It is found in the vacuole membrane. It carries out the reaction a very-long-chain (3R)-3-hydroxyacyl-CoA = a very-long-chain (2E)-enoyl-CoA + H2O. The enzyme catalyses (3R)-hydroxyeicosanoyl-CoA = (2E)-eicosenoyl-CoA + H2O. It catalyses the reaction (3R)-hydroxydocosanoyl-CoA = (2E)-docosenoyl-CoA + H2O. The catalysed reaction is (3R)-hydroxyoctadecanoyl-CoA = (2E)-octadecenoyl-CoA + H2O. It carries out the reaction (3R)-hydroxytetracosanoyl-CoA = (2E)-tetracosenoyl-CoA + H2O. The enzyme catalyses (3R)-hydroxyhexacosanoyl-CoA = (2E)-hexacosenoyl-CoA + H2O. It catalyses the reaction (3R)-hydroxyhexadecanoyl-CoA = (2E)-hexadecenoyl-CoA + H2O. It participates in lipid metabolism; fatty acid biosynthesis. Its function is as follows. Catalyzes the third of the four reactions of the long-chain fatty acids elongation cycle. This endoplasmic reticulum-bound enzymatic process, allows the addition of two carbons to the chain of long- and very long-chain fatty acids/VLCFAs per cycle. This enzyme catalyzes the dehydration of the 3-hydroxyacyl-CoA intermediate into trans-2,3-enoyl-CoA, within each cycle of fatty acid elongation. Thereby, it participates in the production of VLCFAs of different chain lengths that are involved in multiple biological processes as precursors of membrane lipids and lipid mediators. This is Very-long-chain (3R)-3-hydroxyacyl-CoA dehydratase PHS1 (PHS1) from Saccharomyces cerevisiae (strain ATCC 204508 / S288c) (Baker's yeast).